The chain runs to 441 residues: Ribosomal protein uS12 methylthiotransferase RimO (441 aa).

Residues 7–117 (PKVSFVSLGC…VLDAVHRALP (111 aa)) form the MTTase N-terminal domain. The [4Fe-4S] cluster site is built by Cys16, Cys52, Cys81, Cys148, Cys152, and Cys155. The 238-residue stretch at 134 to 371 (LTPRHYAYLK…MARQQKISAR (238 aa)) folds into the Radical SAM core domain. In terms of domain architecture, TRAM spans 374-440 (KRKVGTRQQV…AYDLHGSVAG (67 aa)).

This sequence belongs to the methylthiotransferase family. RimO subfamily. [4Fe-4S] cluster serves as cofactor.

The protein resides in the cytoplasm. It catalyses the reaction L-aspartate(89)-[ribosomal protein uS12]-hydrogen + (sulfur carrier)-SH + AH2 + 2 S-adenosyl-L-methionine = 3-methylsulfanyl-L-aspartate(89)-[ribosomal protein uS12]-hydrogen + (sulfur carrier)-H + 5'-deoxyadenosine + L-methionine + A + S-adenosyl-L-homocysteine + 2 H(+). Functionally, catalyzes the methylthiolation of an aspartic acid residue of ribosomal protein uS12. This Rhodopseudomonas palustris (strain BisB18) protein is Ribosomal protein uS12 methylthiotransferase RimO.